The sequence spans 381 residues: Beta-lactamase (381 aa).

Positions 1–20 are cleaved as a signal peptide; it reads MMKKSICCALLLTASFSTFA. The active-site Acyl-ester intermediate is the serine 84. Residue tyrosine 170 is the Proton acceptor of the active site. 335–337 is a substrate binding site; the sequence is KTG.

This sequence belongs to the class-C beta-lactamase family.

Its subcellular location is the periplasm. The catalysed reaction is a beta-lactam + H2O = a substituted beta-amino acid. With respect to regulation, sulbactam is an effective progressive inhibitor but a poor competitive inhibitor. Functionally, this protein is a serine beta-lactamase with a substrate specificity for cephalosporins. This is Beta-lactamase (ampC) from Citrobacter freundii.